The following is a 108-amino-acid chain: Large ribosomal subunit protein uL23 (108 aa).

It belongs to the universal ribosomal protein uL23 family. In terms of assembly, part of the 50S ribosomal subunit. Contacts protein L29, and trigger factor when it is bound to the ribosome.

One of the early assembly proteins it binds 23S rRNA. One of the proteins that surrounds the polypeptide exit tunnel on the outside of the ribosome. Forms the main docking site for trigger factor binding to the ribosome. The sequence is that of Large ribosomal subunit protein uL23 from Leptothrix cholodnii (strain ATCC 51168 / LMG 8142 / SP-6) (Leptothrix discophora (strain SP-6)).